A 674-amino-acid polypeptide reads, in one-letter code: Polyunsaturated fatty acid 5-lipoxygenase (674 aa).

The region spanning 2–118 is the PLAT domain; that stretch reads PSYTVTVATG…EIVLRDGRAK (117 aa). Gly-17, Thr-18, Asp-19, Asn-44, Asp-45, Glu-47, Asp-79, and Asp-80 together coordinate Ca(2+). Residues 119-674 enclose the Lipoxygenase domain; that stretch reads LARDDQIHIL…PDRIPNSVAI (556 aa). Residue Ser-272 is modified to Phosphoserine. Residues His-368 and His-373 each contribute to the Fe cation site. Position 524 is a phosphoserine (Ser-524). 3 residues coordinate Fe cation: His-551, Asn-555, and Ile-674.

This sequence belongs to the lipoxygenase family. Homodimer. Interacts with ALOX5AP and LTC4S. Interacts with COTL1, the interaction is required for stability and efficient catalytic activity. Interacts with PIK3R1; this interaction bridges ALOX5 with CD40 after CD40 ligation in B cells and leads to the production of reactive oxygen species (ROS). Interacts (via PLAT domain) with DICER1 (via Dicer dsRNA-binding fold domain); this interaction enhances arachidonate 5-lipoxygenase activity and modifies the miRNA precursor processing activity of DICER1. Fe cation serves as cofactor. Post-translationally, serine phosphorylation by MAPKAPK2 is stimulated by arachidonic acid. Phosphorylation on Ser-524 by PKA has an inhibitory effect. Phosphorylation on Ser-272 prevents export from the nucleus. Phosphorylation at Ser-524 is stimulated by 8-bromo-3',5'-cyclic AMP or prostaglandin E2. In terms of tissue distribution, expressed in skin Langerhans cells and their emigrated counterparts in draining lymph nodes. Highly expressed in circulating leukocytes.

It localises to the cytoplasm. It is found in the nucleus matrix. The protein localises to the nucleus membrane. The protein resides in the perinuclear region. Its subcellular location is the cytosol. It localises to the nucleus envelope. It is found in the nucleus intermembrane space. It catalyses the reaction (5Z,8Z,11Z,14Z)-eicosatetraenoate + O2 = (5S)-hydroperoxy-(6E,8Z,11Z,14Z)-eicosatetraenoate. The catalysed reaction is (5Z,8Z,11Z,14Z)-eicosatetraenoate + O2 = leukotriene A4 + H2O. It carries out the reaction (5Z,8Z,11Z,14Z)-eicosatetraenoate + O2 = (8S)-hydroperoxy-(5Z,9E,11Z,14Z)-eicosatetraenoate. The enzyme catalyses (5Z,8Z,11Z,14Z)-eicosatetraenoate + O2 = (12S)-hydroperoxy-(5Z,8Z,10E,14Z)-eicosatetraenoate. It catalyses the reaction 18-HEPE + O2 = (5S)-hydroperoxy-18-hydroxy-(7E,9E,11Z,14Z,16E)-eicosapentaenoate. The catalysed reaction is (18R)-hydroxy-(5Z,8Z,11Z,14Z,16E)-eicosapentaenoate + O2 = (5S)-hydroperoxy-(18R)-hydroxy-(6E,8Z,11Z,14Z,16E)-eicosapentaenoate. It carries out the reaction (18S)-hydroxy-(5Z,8Z,11Z,14Z,16E)-eicosapentaenoate + O2 = (5S)-hydroperoxy-(18S)-hydroxy-(6E,8Z,11Z,14Z,16E)-eicosapentaenoate. The enzyme catalyses (5S)-hydroperoxy-(18S)-hydroxy-(6E,8Z,11Z,14Z,16E)-eicosapentaenoate = (5S,6S)-epoxy-(18S)-hydroxy-(7E,9E,11Z,14Z,16E)-eicosapentaenoate + H2O. It catalyses the reaction (5S)-hydroperoxy-(18R)-hydroxy-(6E,8Z,11Z,14Z,16E)-eicosapentaenoate = (5S,6S)-epoxy-(18R)-hydroxy-(7E,9E,11Z,14Z,16E)-eicosapentaenoate + H2O. The catalysed reaction is (5S)-hydroperoxy-18-hydroxy-(7E,9E,11Z,14Z,16E)-eicosapentaenoate = (5S,6S)-epoxy-18-hydroxy-(7E,9E,11Z,14Z,16E)-eicosapentaenoate + H2O. It carries out the reaction (15S)-hydroxy-(5Z,8Z,11Z,13E)-eicosatetraenoate + O2 = (5S)-hydroperoxy-(15S)-hydroxy-(6E,8Z,11Z,13E)-eicosatetraenoate. The enzyme catalyses (5S)-hydroperoxy-(6E,8Z,11Z,14Z)-eicosatetraenoate = leukotriene A4 + H2O. It catalyses the reaction (5Z,8Z)-eicosadienoate + O2 = (5S)-hydroperoxy-(6E,8Z)-eicosadienoate. The catalysed reaction is (12S)-hydroxy-(5Z,8Z,10E,14Z)-eicosatetraenoate + O2 = (5S)-hydroperoxy-(12S)-hydroxy-(6E,8Z,10E,14Z)-eicosatetraenoate. It carries out the reaction (5Z,8Z,11Z,14Z,17Z)-eicosapentaenoate + O2 = 5-hydroperoxy-(6E,8Z,11Z,14Z,17Z)-eicosapentaenoate. The enzyme catalyses (4Z,7Z,10Z,13Z,16Z,19Z)-docosahexaenoate + O2 = (14S)-hydroperoxy-(4Z,7Z,10Z,12E,16Z,19Z)-docosahexaenoate. It catalyses the reaction (4Z,7Z,10Z,13Z,16Z,19Z)-docosahexaenoate + O2 = (7S)-hydroperoxy-(4Z,8E,10Z,13Z,16Z,19Z)-docosahexaenoate. The catalysed reaction is (4Z,7Z,10Z,13Z,16Z,19Z)-docosahexaenoate + O2 = (17S)-hydroperoxy-(4Z,7Z,10Z,13Z,15E,19Z)-docosahexaenoate. It functions in the pathway lipid metabolism; leukotriene A4 biosynthesis. Functionally, catalyzes the oxygenation of arachidonate to 5-hydroperoxyeicosatetraenoate (5-HPETE) followed by the dehydration to 5,6- epoxyeicosatetraenoate (Leukotriene A4/LTA4), the first two steps in the biosynthesis of leukotrienes, which are potent mediators of inflammation. Also catalyzes the oxygenation of arachidonic acid into 8-hydroperoxyicosatetraenoic acid (8-HPETE) and 12-hydroperoxyicosatetraenoic acid (12-HPETE). Displays lipoxin synthase activity being able to convert (15S)-HETE into a conjugate tetraene. Although arachidonate is the preferred substrate, this enzyme can also metabolize oxidized fatty acids derived from arachidonate such as (15S)-HETE, eicosapentaenoate (EPA) such as (18R)- and (18S)-HEPE or docosahexaenoate (DHA) which lead to the formation of specialized pro-resolving mediators (SPM) lipoxin and resolvins E and D respectively, therefore it participates in anti-inflammatory responses. Oxidation of DHA directly inhibits endothelial cell proliferation and sprouting angiogenesis via peroxisome proliferator-activated receptor gamma (PPARgamma). It does not catalyze the oxygenation of linoleic acid and does not convert (5S)-HETE to lipoxin isomers. In addition to inflammatory processes, participates in dendritic cell migration, wound healing through an antioxidant mechanism based on heme oxygenase-1 (HO-1) regulation expression, monocyte adhesion to the endothelium via ITGAM expression on monocytes. Moreover, it helps establish an adaptive humoral immunity by regulating primary resting B cells and follicular helper T cells and participates in the CD40-induced production of reactive oxygen species (ROS) after CD40 ligation in B cells through interaction with PIK3R1 that bridges ALOX5 with CD40. May also play a role in glucose homeostasis, regulation of insulin secretion and palmitic acid-induced insulin resistance via AMPK. Can regulate bone mineralization and fat cell differentiation increases in induced pluripotent stem cells. The polypeptide is Polyunsaturated fatty acid 5-lipoxygenase (Mus musculus (Mouse)).